Here is a 425-residue protein sequence, read N- to C-terminus: MAAKWEKLEGNVGVLTIEVDAKEVNNSIDAAFKKVVKTINVPGFRKGKMPRPLFEQRFGVESLYQDALDIILPKAYGEAIDEAGIFPVAHPEIDIEKFEKNANLIFTAKVTVKPEVKLGEYKGLAVEKVETTVTDEDVENELKSLQERQAELVVKEEGTVENGDTAVIDFEGFVDGEAFEGGKGENYSLAIGSGTFIPGFEEQLIGLKSGESKDVEVSFPEEYHAAELAGKPATFKVTVHEIKTKELPELNDEFAKEADEAVATLDELKAKLRTNLEEGKKHEAEHKVRDEVVELAAANAEIDIPEAMIDTELDRMVREFEQRLSQQGMNLELYYQFTGTDADKLKEQMKEDAQKRVRINLVLEAIIEAENIEVTEEEVTAEVEKMAEMYGMPVDAIKQALGSVDALAEDLKVRKAVDFLVENAA.

The region spanning Gly163–Pro248 is the PPIase FKBP-type domain.

Belongs to the FKBP-type PPIase family. Tig subfamily.

It is found in the cytoplasm. The catalysed reaction is [protein]-peptidylproline (omega=180) = [protein]-peptidylproline (omega=0). Involved in protein export. Acts as a chaperone by maintaining the newly synthesized protein in an open conformation. Functions as a peptidyl-prolyl cis-trans isomerase. This is Trigger factor from Bacillus cereus (strain Q1).